We begin with the raw amino-acid sequence, 559 residues long: ATP synthase subunit beta-3, mitochondrial (559 aa).

Over residues 1–28 (MASRRILSSLLRSSSSRSTSKSSLIGSR) the composition is skewed to low complexity. Positions 1-39 (MASRRILSSLLRSSSSRSTSKSSLIGSRNPRLLSPGPAH) are disordered. The transit peptide at 1–54 (MASRRILSSLLRSSSSRSTSKSSLIGSRNPRLLSPGPAHGAAPCGTLLGRVAEY) directs the protein to the mitochondrion. At S62 the chain carries Phosphoserine. 234 to 241 (GGAGVGKT) lines the ATP pocket.

This sequence belongs to the ATPase alpha/beta chains family. As to quaternary structure, F-type ATPases have 2 components, CF(1) - the catalytic core - and CF(0) - the membrane proton channel. CF(1) has five subunits: alpha(3), beta(3), gamma(1), delta(1), epsilon(1). CF(0) has three main subunits: a, b and c.

It is found in the mitochondrion. Its subcellular location is the mitochondrion inner membrane. It carries out the reaction ATP + H2O + 4 H(+)(in) = ADP + phosphate + 5 H(+)(out). Functionally, mitochondrial membrane ATP synthase (F(1)F(0) ATP synthase or Complex V) produces ATP from ADP in the presence of a proton gradient across the membrane which is generated by electron transport complexes of the respiratory chain. F-type ATPases consist of two structural domains, F(1) - containing the extramembraneous catalytic core, and F(0) - containing the membrane proton channel, linked together by a central stalk and a peripheral stalk. During catalysis, ATP synthesis in the catalytic domain of F(1) is coupled via a rotary mechanism of the central stalk subunits to proton translocation. Subunits alpha and beta form the catalytic core in F(1). Rotation of the central stalk against the surrounding alpha(3)beta(3) subunits leads to hydrolysis of ATP in three separate catalytic sites on the beta subunits. The polypeptide is ATP synthase subunit beta-3, mitochondrial (Arabidopsis thaliana (Mouse-ear cress)).